Here is a 40-residue protein sequence, read N- to C-terminus: Fibrinolytic protease (40 aa).

The region spanning 1 to 40 (IVGGNEVTPHAYPWQVGLFIDDMYFCGGSISVTLTGWGKP) is the Peptidase S1 domain.

The protein belongs to the peptidase S1 family.

Its subcellular location is the secreted. The protein localises to the extracellular space. Serine protease with fibrinolytic activity. This is Fibrinolytic protease from Euphausia superba (Antarctic krill).